The chain runs to 194 residues: Peptidyl-tRNA hydrolase (194 aa).

Residue Y17 participates in tRNA binding. The Proton acceptor role is filled by H22. Residues F68, N70, and N116 each coordinate tRNA.

Belongs to the PTH family. As to quaternary structure, monomer.

The protein localises to the cytoplasm. The enzyme catalyses an N-acyl-L-alpha-aminoacyl-tRNA + H2O = an N-acyl-L-amino acid + a tRNA + H(+). Its function is as follows. Hydrolyzes ribosome-free peptidyl-tRNAs (with 1 or more amino acids incorporated), which drop off the ribosome during protein synthesis, or as a result of ribosome stalling. Catalyzes the release of premature peptidyl moieties from peptidyl-tRNA molecules trapped in stalled 50S ribosomal subunits, and thus maintains levels of free tRNAs and 50S ribosomes. The chain is Peptidyl-tRNA hydrolase from Haemophilus influenzae (strain ATCC 51907 / DSM 11121 / KW20 / Rd).